A 273-amino-acid chain; its full sequence is HTH-type transcriptional activator RhaS (273 aa).

One can recognise an HTH araC/xylS-type domain in the interval 174 to 272 (YQLLDWLQNN…SQSPRDLRSQ (99 aa)). DNA-binding regions (H-T-H motif) lie at residues 191 to 212 (PELADRFALPLRTLHRQLKNKT) and 239 to 262 (VTDIAYLCGFGDSNHFSTLFKREF).

In terms of assembly, binds DNA as a dimer.

Its subcellular location is the cytoplasm. Functionally, activates expression of the rhaBAD and rhaT operons. The polypeptide is HTH-type transcriptional activator RhaS (Yersinia pestis bv. Antiqua (strain Angola)).